Here is a 375-residue protein sequence, read N- to C-terminus: Tryptophan dimethylallyltransferase (375 aa).

L-tryptophan is bound by residues 83–84 (IL) and E92. 3 residues coordinate substrate: R103, K189, and Y191. The L-tryptophan site is built by Y193 and R246. The substrate site is built by R259, K261, Y263, Q345, and Y347.

Belongs to the tryptophan dimethylallyltransferase family. As to quaternary structure, homodimer.

It carries out the reaction L-tryptophan + dimethylallyl diphosphate = 4-(3-methylbut-2-enyl)-L-tryptophan + diphosphate. It functions in the pathway alkaloid biosynthesis; ergot alkaloid biosynthesis. In terms of biological role, tryptophan dimethylallyltransferase; part of the gene cluster that mediates the biosynthesis of fungal ergot alkaloid. DmaW catalyzes the first step of ergot alkaloid biosynthesis by condensing dimethylallyl diphosphate (DMAP) and tryptophan to form 4-dimethylallyl-L-tryptophan. The second step is catalyzed by the methyltransferase easF that methylates 4-dimethylallyl-L-tryptophan in the presence of S-adenosyl-L-methionine, resulting in the formation of 4-dimethylallyl-L-abrine. The catalase easC and the FAD-dependent oxidoreductase easE then transform 4-dimethylallyl-L-abrine to chanoclavine-I which is further oxidized by easD in the presence of NAD(+), resulting in the formation of chanoclavine-I aldehyde. Chanoclavine-I aldehyde is the precursor of ergoamides and ergopeptines in Clavicipitaceae, and clavine-type alcaloids such as fumiclavine in Trichocomaceae. However, the metabolites downstream of chanoclavine-I aldehyde in Arthrodermataceae have not been identified yet. In Trichophyton verrucosum (strain HKI 0517), this protein is Tryptophan dimethylallyltransferase.